The chain runs to 523 residues: Probable malate:quinone oxidoreductase (523 aa).

It belongs to the MQO family. FAD serves as cofactor.

It carries out the reaction (S)-malate + a quinone = a quinol + oxaloacetate. It participates in carbohydrate metabolism; tricarboxylic acid cycle; oxaloacetate from (S)-malate (quinone route): step 1/1. The polypeptide is Probable malate:quinone oxidoreductase (Agrobacterium fabrum (strain C58 / ATCC 33970) (Agrobacterium tumefaciens (strain C58))).